The following is a 311-amino-acid chain: MAAARAPRALTSASPGSGKAKLTHPGKAILAGGLAGGIEICITFPTEYVKTQLQLDERSHPPRYRGIGDCVRQTVRSHGLLGLYRGLSSLLYGSIPKAAVRFGTFEFLSNHMRDAQGRLDSTRGLLCGLGAGVPEAVVVVCPMETIKVKFIHDQTSASPKYRGFFHGVREIVREQGLKGTYQGLTATVLKQGSNQGIRFFVMTSLRNWYRGDNPNKPMNPLITGVFGAIAGAASVFGNTPLDVIKTRMQGLEAHKYRNTLDCGLQILRNEGLKAFYKGTVPRLGRVCLDVAIVFIIYDEVVKLLNKVWKAD.

The propeptide at 1–13 (MAAARAPRALTSA) is removed in mature form. Residues 1-15 (MAAARAPRALTSASP) are compositionally biased toward low complexity. The interval 1–22 (MAAARAPRALTSASPGSGKAKL) is disordered. Solcar repeat units lie at residues 23 to 111 (THPG…LSNH), 122 to 208 (TRGL…LRNW), and 218 to 303 (MNPL…VVKL). The next 3 membrane-spanning stretches (helical) occupy residues 29-46 (ILAG…TFPT), 86-105 (GLSS…FGTF), and 129-143 (LGAG…VCPM). Position 156 is a phosphoserine (S156). Helical transmembrane passes span 183–202 (GLTA…FFVM), 224–241 (GVFG…NTPL), and 278–297 (GTVP…FIIY).

This sequence belongs to the mitochondrial carrier (TC 2.A.29) family. In terms of processing, possesses a short cleavable presequence, which, however, is found to be dispensable both for targeting to mitochondria and insertion into the inner membrane. However, the presequence is required to keep SLC25A1 in a soluble state and thus in an import-competent state. Mature SLC25A1 lacking the presequence is prone to aggregation.

It is found in the mitochondrion inner membrane. It localises to the mitochondrion membrane. The enzyme catalyses (S)-malate(in) + citrate(out) = (S)-malate(out) + citrate(in). The catalysed reaction is D-threo-isocitrate(in) + citrate(out) = D-threo-isocitrate(out) + citrate(in). It catalyses the reaction citrate(out) + succinate(in) = citrate(in) + succinate(out). It carries out the reaction phosphoenolpyruvate(in) + citrate(out) = phosphoenolpyruvate(out) + citrate(in). The enzyme catalyses cis-aconitate(in) + citrate(out) = cis-aconitate(out) + citrate(in). The catalysed reaction is trans-aconitate(in) + citrate(out) = trans-aconitate(out) + citrate(in). It catalyses the reaction maleate(in) + citrate(out) = maleate(out) + citrate(in). Functionally, mitochondrial electroneutral antiporter that exports citrate from the mitochondria into the cytosol in exchange for malate. Also able to mediate the exchange of citrate for isocitrate, phosphoenolpyruvate, cis-aconitate and to a lesser extent trans-aconitate, maleate and succinate. In the cytoplasm, citrate plays important roles in fatty acid and sterol synthesis, regulation of glycolysis, protein acetylation, and other physiopathological processes. The chain is Tricarboxylate transport protein, mitochondrial (SLC25A1) from Bos taurus (Bovine).